Here is a 466-residue protein sequence, read N- to C-terminus: Glutamate--tRNA ligase (466 aa).

The 'HIGH' region signature appears at 10–20 (PSPTGYLHVGG). 4 residues coordinate Zn(2+): cysteine 99, cysteine 101, cysteine 126, and histidine 128. The 'KMSKS' region motif lies at 237–241 (RLSKR). Lysine 240 is a binding site for ATP.

This sequence belongs to the class-I aminoacyl-tRNA synthetase family. Glutamate--tRNA ligase type 1 subfamily. As to quaternary structure, monomer. Zn(2+) serves as cofactor.

Its subcellular location is the cytoplasm. It carries out the reaction tRNA(Glu) + L-glutamate + ATP = L-glutamyl-tRNA(Glu) + AMP + diphosphate. In terms of biological role, catalyzes the attachment of glutamate to tRNA(Glu) in a two-step reaction: glutamate is first activated by ATP to form Glu-AMP and then transferred to the acceptor end of tRNA(Glu). This chain is Glutamate--tRNA ligase, found in Trichlorobacter lovleyi (strain ATCC BAA-1151 / DSM 17278 / SZ) (Geobacter lovleyi).